We begin with the raw amino-acid sequence, 22 residues long: Heat shock 70-related protein 1, mitochondrial (22 aa).

This sequence belongs to the heat shock protein 70 family.

The protein resides in the mitochondrion. The protein is Heat shock 70-related protein 1, mitochondrial of Leishmania tarentolae (Sauroleishmania tarentolae).